Reading from the N-terminus, the 711-residue chain is Putative membrane protein IgaA homolog (711 aa).

M1 is a topological domain (periplasmic). Residues 2–22 (STIVIFLAALLACSLLAGWLI) form a helical membrane-spanning segment. At 23–204 (KVRSRRRQLP…YALSRPRGLR (182 aa)) the chain is on the cytoplasmic side. Helical transmembrane passes span 205–225 (EALL…TPDV) and 226–246 (FVPW…WGLF). Residues 247 to 339 (APPAKSSLRE…KNFPLQHWLR (93 aa)) are Cytoplasmic-facing. Residues 340 to 360 (STIIAAGSLLVLFMLLFWIPL) form a helical membrane-spanning segment. Topologically, residues 361–655 (DMPLKFTLSW…IPDRSGLWRY (295 aa)) are periplasmic. The helical transmembrane segment at 656–676 (LSTTLLLLTMLGSAIYNGVQA) threads the bilayer. At 677–711 (WRRYQRHRTRMMEIQAYYESCLNPQLITPSESLIE) the chain is on the cytoplasmic side.

Belongs to the IgaA family.

It is found in the cell inner membrane. The chain is Putative membrane protein IgaA homolog (yrfF) from Escherichia coli (strain K12).